A 1755-amino-acid chain; its full sequence is Transposon Ty1-GR3 Gag-Pol polyprotein (1755 aa).

Composition is skewed to polar residues over residues 1–10 (MESQQLSNYP), 48–60 (TKAN…TPAS), and 127–152 (QSQF…GNTF). Disordered regions lie at residues 1–93 (MESQ…MMTQ), 126–173 (PQSQ…RPPP), and 352–421 (GSRN…SKST). Residues 153–165 (TDSSSADSDMTST) are compositionally biased toward low complexity. Positions 299-401 (NNGIHINNKV…NSKSKTARAH (103 aa)) are RNA-binding. Residues 402 to 418 (NVSTSNNSPSTDNDSIS) are compositionally biased toward low complexity. S416 is subject to Phosphoserine. D461 functions as the For protease activity; shared with dimeric partner in the catalytic mechanism. The integrase-type zinc finger-like stretch occupies residues 583–640 (NVHTSESTRKYPYPFIHRMLAHANAQTIRYSLKNNTITYFNESDVDWSSAIDYQCPDC). In terms of domain architecture, Integrase catalytic spans 660–835 (NSYEPFQYLH…AGLDISTLLP (176 aa)). D671 and D736 together coordinate Mg(2+). Residues 956–1172 (SKAVSPTDST…LGGIGDSNAY (217 aa)) form a disordered region. Residues 960 to 969 (SPTDSTPPST) show a composition bias toward low complexity. Composition is skewed to polar residues over residues 1005-1015 (STPQISNIEST) and 1031-1043 (MSQS…SYAS). The span at 1044–1053 (KSKDFRHSDS) shows a compositional bias: basic and acidic residues. 2 stretches are compositionally biased toward polar residues: residues 1054 to 1082 (YSDN…QTSE) and 1095 to 1106 (SIDTSSSESNSL). Positions 1178–1212 (KKRSLEDNETEIKVSRDTWNTKNMRSLEPPRSKKR) match the Bipartite nuclear localization signal motif. The Reverse transcriptase Ty1/copia-type domain maps to 1338–1476 (NNYYITQLDI…DILGLEIKYQ (139 aa)). D1346, D1427, D1428, D1610, E1652, and D1685 together coordinate Mg(2+). Residues 1610 to 1752 (DASYGNQPYY…IKTFKLLTNK (143 aa)) enclose the RNase H Ty1/copia-type domain.

As to quaternary structure, the capsid protein forms a homotrimer, from which the VLPs are assembled. The protease is a homodimer, whose active site consists of two apposed aspartic acid residues. Post-translationally, initially, virus-like particles (VLPs) are composed of the structural unprocessed proteins Gag and Gag-Pol, and also contain the host initiator methionine tRNA (tRNA(i)-Met) which serves as a primer for minus-strand DNA synthesis, and a dimer of genomic Ty RNA. Processing of the polyproteins occurs within the particle and proceeds by an ordered pathway, called maturation. First, the protease (PR) is released by autocatalytic cleavage of the Gag-Pol polyprotein yielding capsid protein p45 and a Pol-p154 precursor protein. This cleavage is a prerequisite for subsequent processing of Pol-p154 at the remaining sites to release the mature structural and catalytic proteins. Maturation takes place prior to the RT reaction and is required to produce transposition-competent VLPs.

The protein resides in the cytoplasm. It localises to the nucleus. It catalyses the reaction DNA(n) + a 2'-deoxyribonucleoside 5'-triphosphate = DNA(n+1) + diphosphate. It carries out the reaction Endonucleolytic cleavage to 5'-phosphomonoester.. Its function is as follows. Capsid protein (CA) is the structural component of the virus-like particle (VLP), forming the shell that encapsulates the retrotransposons dimeric RNA genome. The particles are assembled from trimer-clustered units and there are holes in the capsid shells that allow for the diffusion of macromolecules. CA also has nucleocapsid-like chaperone activity, promoting primer tRNA(i)-Met annealing to the multipartite primer-binding site (PBS), dimerization of Ty1 RNA and initiation of reverse transcription. Functionally, the aspartyl protease (PR) mediates the proteolytic cleavages of the Gag and Gag-Pol polyproteins after assembly of the VLP. In terms of biological role, reverse transcriptase/ribonuclease H (RT) is a multifunctional enzyme that catalyzes the conversion of the retro-elements RNA genome into dsDNA within the VLP. The enzyme displays a DNA polymerase activity that can copy either DNA or RNA templates, and a ribonuclease H (RNase H) activity that cleaves the RNA strand of RNA-DNA heteroduplexes during plus-strand synthesis and hydrolyzes RNA primers. The conversion leads to a linear dsDNA copy of the retrotransposon that includes long terminal repeats (LTRs) at both ends. Integrase (IN) targets the VLP to the nucleus, where a subparticle preintegration complex (PIC) containing at least integrase and the newly synthesized dsDNA copy of the retrotransposon must transit the nuclear membrane. Once in the nucleus, integrase performs the integration of the dsDNA into the host genome. In Saccharomyces cerevisiae (strain ATCC 204508 / S288c) (Baker's yeast), this protein is Transposon Ty1-GR3 Gag-Pol polyprotein (TY1B-GR3).